We begin with the raw amino-acid sequence, 521 residues long: Acetyl-CoA hydrolase (521 aa).

276 to 280 (GIGNI) contacts CoA. The 5-glutamyl coenzyme A thioester intermediate role is filled by Glu-301. Asn-391 and Gly-395 together coordinate CoA.

Belongs to the acetyl-CoA hydrolase/transferase family.

The protein resides in the cytoplasm. It carries out the reaction acetyl-CoA + H2O = acetate + CoA + H(+). Its function is as follows. Presumably involved in regulating the intracellular acetyl-CoA pool for fatty acid and cholesterol synthesis and fatty acid oxidation. The polypeptide is Acetyl-CoA hydrolase (ach1) (Schizosaccharomyces pombe (strain 972 / ATCC 24843) (Fission yeast)).